Here is a 174-residue protein sequence, read N- to C-terminus: UBX domain-containing protein 5 (174 aa).

Residues 8–58 (QKEKFAEDRALLSQQNKEYAESLAKDIAKKEEKDKIRFEAEQKELRKKTIQ) are a coiled coil. In terms of domain architecture, UBX spans 74 to 120 (RLLVRYPNGSRLILSFSPSQPMTSLFDAIILNPACPDYFSVRSVYPR).

In terms of assembly, forms a complex composed of deubiquitinating enzyme atx-3, adapter ubxn-5 and cdc-48.1. Interacts with atx-3 (via C-terminus). Interacts with cdc-48.1 (via N-terminus) and cdc-48.2. In terms of tissue distribution, specifically expressed in the germline.

In terms of biological role, probably acts as an adapter for ATPase cdc-48.1 and/or cdc-48.2, conferring substrate specificity. Unlike other UBX domain-containing protein does not bind 'Lys-48'-polyubiquitinated chain. In Caenorhabditis elegans, this protein is UBX domain-containing protein 5.